Reading from the N-terminus, the 303-residue chain is Putative fimbrium subunit Fim1C (303 aa).

The signal sequence occupies residues 1 to 22 (MKKQALICALLATVLLPGCSED).

The protein belongs to the bacteroidetes fimbrillin superfamily. Mfa-like family. As to quaternary structure, may be part of the fimbrial tip.

The protein resides in the fimbrium. Putative component of the fimbrium tip. Fimbriae are filamentous appendages on the cell surface that mediate cell adhesion and biofilm formation. This Bacteroides uniformis (strain ATCC 8492 / DSM 6597 / CCUG 4942 / CIP 103695 / JCM 5828 / KCTC 5204 / NCTC 13054 / VPI 0061) protein is Putative fimbrium subunit Fim1C (fim1C).